Consider the following 406-residue polypeptide: Cytochrome bc1 complex Rieske iron-sulfur subunit (406 aa).

The next 3 membrane-spanning stretches (helical) occupy residues 56 to 76, 98 to 118, and 166 to 186; these read VGIW…VYLF, LLGL…IFYI, and MLGI…GGMV. Residues 291 to 388 enclose the Rieske domain; sequence HGPRNAVMLI…ITVDEEGYLV (98 aa). [2Fe-2S] cluster-binding residues include C331, H333, C350, and H353. C336 and C352 are disulfide-bonded.

Belongs to the Rieske iron-sulfur protein family. As to quaternary structure, the cytochrome bc1 complex is composed of a cytochrome b (QcrB), the Rieske iron-sulfur protein (QcrA) and a diheme cytochrome c (QcrC) subunit. The bc1 complex forms a supercomplex with cytochrome c oxidase (cytochrome aa3). The cofactor is [2Fe-2S] cluster.

It is found in the cell membrane. Iron-sulfur subunit of the cytochrome bc1 complex, an essential component of the respiratory electron transport chain required for ATP synthesis. The bc1 complex catalyzes the oxidation of menaquinol and the reduction of cytochrome c in the respiratory chain. The bc1 complex operates through a Q-cycle mechanism that couples electron transfer to generation of the proton gradient that drives ATP synthesis. In Corynebacterium diphtheriae (strain ATCC 700971 / NCTC 13129 / Biotype gravis), this protein is Cytochrome bc1 complex Rieske iron-sulfur subunit (qcrA).